The following is a 254-amino-acid chain: Pre-miRNA 5'-monophosphate methyltransferase (254 aa).

One can recognise a Bin3-type SAM domain in the interval 34-254 (ENRLSLIPEA…DRSLLLFRRQ (221 aa)). S-adenosyl-L-methionine is bound by residues arginine 36, asparagine 66, aspartate 99, and 124–125 (DI).

This sequence belongs to the methyltransferase superfamily.

It is found in the cytoplasm. The catalysed reaction is a 5'-end 5'-phospho-ribonucleoside-RNA + S-adenosyl-L-methionine = a 5'-end (5'-methylphospho)-ribonucleoside-RNA + S-adenosyl-L-homocysteine. It carries out the reaction a 5'-end 5'-phospho-ribonucleoside-RNA + 2 S-adenosyl-L-methionine = a 5'-end (5'-bismethylphospho)-ribonucleoside-RNA + 2 S-adenosyl-L-homocysteine. Functionally, O-methyltransferase that specifically monomethylates 5'-monophosphate of cytoplasmic histidyl tRNA (tRNA(His)), acting as a capping enzyme by protecting tRNA(His) from cleavage by DICER1. Also able, with less efficiently, to methylate the 5' monophosphate of a subset of pre-miRNAs, acting as a negative regulator of miRNA processing. The 5' monophosphate of pre-miRNAs is recognized by DICER1 and is required for pre-miRNAs processing: methylation at this position reduces the processing of pre-miRNAs by DICER1. Was also reported to mediate dimethylation of pre-miR-145; however dimethylation cannot be reproduced by another group which observes a monomethylation of pre-miR-145. In Danio rerio (Zebrafish), this protein is Pre-miRNA 5'-monophosphate methyltransferase (bcdin3d).